A 572-amino-acid chain; its full sequence is BOS complex subunit ncln (572 aa).

Residues 1 to 35 (MFEEAGEVLENMLKVSFPLSLVLFLVLVCPLRAEA) form the signal peptide. Residues 36 to 530 (AHEFSVYRMQ…TMNAYRVKPA (495 aa)) lie on the Extracellular side of the membrane. Asn108, Asn234, and Asn436 each carry an N-linked (GlcNAc...) asparagine glycan. The helical transmembrane segment at 531-551 (IFDLLLAVCIASYLGVLYLAI) threads the bilayer. Topologically, residues 552–572 (QNFGLLYGFLRRVTAPRVKQH) are cytoplasmic.

Belongs to the nicastrin family. Component of the multi-pass translocon (MPT) complex.

It localises to the endoplasmic reticulum membrane. Its function is as follows. Component of the multi-pass translocon (MPT) complex that mediates insertion of multi-pass membrane proteins into the lipid bilayer of membranes. The MPT complex takes over after the SEC61 complex: following membrane insertion of the first few transmembrane segments of proteins by the SEC61 complex, the MPT complex occludes the lateral gate of the SEC61 complex to promote insertion of subsequent transmembrane regions. Antagonizes Nodal signaling and subsequent organization of axial structures during mesodermal patterning. Ectopic expression results in cyclopia, due to a defect in mesendoderm patterning. The sequence is that of BOS complex subunit ncln (ncln) from Danio rerio (Zebrafish).